Consider the following 88-residue polypeptide: UPF0298 protein BC_3932 (88 aa).

The protein belongs to the UPF0298 family.

The protein resides in the cytoplasm. This chain is UPF0298 protein BC_3932, found in Bacillus cereus (strain ATCC 14579 / DSM 31 / CCUG 7414 / JCM 2152 / NBRC 15305 / NCIMB 9373 / NCTC 2599 / NRRL B-3711).